Consider the following 191-residue polypeptide: MGKKTKRTADSSSSEDEEEYVVEKVLDRRVVKGQVEYLLKWKGFSEEHNTWEPEKNLDCPELISEFMKKYKKMKEGENNKPREKSESNKRKSNFSNSADDIKSKKKREQSNDIARGFERGLEPEKIIGATDSCGDLMFLMKWKDTDEADLVLAKEANVKCPQIVIAFYEERLTWHAYPEDAENKEKETAKS.

Phosphoserine occurs at positions 11, 12, 13, and 14. One can recognise a Chromo 1 domain in the interval 20–78 (YVVEKVLDRRVVKGQVEYLLKWKGFSEEHNTWEPEKNLDCPELISEFMKKYKKMKEGEN). A Glycyl lysine isopeptide (Lys-Gly) (interchain with G-Cter in SUMO2) cross-link involves residue Lys32. N6-acetyllysine is present on Lys40. Residues 70-117 (YKKMKEGENNKPREKSESNKRKSNFSNSADDIKSKKKREQSNDIARGF) form a disordered region. The span at 73–89 (MKEGENNKPREKSESNK) shows a compositional bias: basic and acidic residues. A Glycyl lysine isopeptide (Lys-Gly) (interchain with G-Cter in SUMO2) cross-link involves residue Lys91. 3 positions are modified to phosphoserine: Ser92, Ser95, and Ser97. Residues Lys102, Lys106, Lys154, and Lys184 each participate in a glycyl lysine isopeptide (Lys-Gly) (interchain with G-Cter in SUMO2) cross-link. Residues 121–179 (LEPEKIIGATDSCGDLMFLMKWKDTDEADLVLAKEANVKCPQIVIAFYEERLTWHAYPE) form the Chromo 2; shadow subtype domain.

Homodimer. Interacts with histone H3 methylated at 'Lys-9'. Interacts (via Chromo 2; shadow subtype domain) with the MIS12 complex subunit NSL1; the interaction is direct, involves dimeric CBX5, and occurs during interphase. Interacts with POGZ; POGZ and PXVXL motif-containing proteins such as INCENP and TRIM28 compete for interaction with CBX5. Interacts with LRIF1 (via PxVxL motif). Interacts with INCENP. Interacts with TRIM24. Interacts (via the chromoshadow domain) with ATRX; the interaction is direct. Interacts (via the chromoshadow domain) with CHAF1A; the interaction is direct. Interacts (via the chromoshadow domain) with LBR; the interaction is direct. Interacts (via the chromoshadow domain) with NIPBL; the interaction is direct. Interacts (via the chromoshadow domain) with SP100; the interaction is direct. Interacts (via the chromoshadow domain) with STAM2; the interaction is direct. Interacts (via the chromoshadow domain) with TRIM28; the interaction is direct. Interacts (via the chromoshadow domain) with CBX3; the interaction is direct. Interacts with PRR14 (via N-terminus). Interacts with RRP1B. Interacts with HNRNPU (via C-terminus); this interaction is, at least in part, RNA-dependent. Interacts with ZNF263; recruited to the SIX3 promoter along with other proteins involved in chromatin modification and transcriptional corepression where it contributes to transcriptional repression. Interacts with AURKB during mitosis. Interacts with CHAMP1. Interacts with BAHD1. Interacts with HP1BP3. Interacts with CHD3. Interacts with CHD4. Interacts with SMYD5. Interacts with KMT5B. Interacts with KMT5C. As to quaternary structure, (Microbial infection) Interacts with JC virus agnoprotein; this interaction induces the dissociation of CBX5 from LBR, resulting in destabilization of the nuclear envelope. Phosphorylation of HP1 and LBR may be responsible for some of the alterations in chromatin organization and nuclear structure which occur at various times during the cell cycle. Phosphorylated during interphase and possibly hyper-phosphorylated during mitosis. In terms of processing, ubiquitinated.

It localises to the nucleus. It is found in the chromosome. Its subcellular location is the centromere. Functionally, component of heterochromatin that recognizes and binds histone H3 tails methylated at 'Lys-9' (H3K9me), leading to epigenetic repression. In contrast, it is excluded from chromatin when 'Tyr-41' of histone H3 is phosphorylated (H3Y41ph). May contribute to the association of heterochromatin with the inner nuclear membrane by interactions with the lamin-B receptor (LBR). Involved in the formation of kinetochore through interaction with the MIS12 complex subunit NSL1. Required for the formation of the inner centromere. This chain is Chromobox protein homolog 5 (CBX5), found in Homo sapiens (Human).